Consider the following 610-residue polypeptide: UvrABC system protein C (610 aa).

The 79-residue stretch at 13-91 (HLPGVYRMYD…IKENQPKYNV (79 aa)) folds into the GIY-YIG domain. Positions 201–236 (GQVVEHLVQKMENAAQELDFEAAARFRDQIQSVRAV) constitute a UVR domain.

It belongs to the UvrC family. Interacts with UvrB in an incision complex.

The protein resides in the cytoplasm. Functionally, the UvrABC repair system catalyzes the recognition and processing of DNA lesions. UvrC both incises the 5' and 3' sides of the lesion. The N-terminal half is responsible for the 3' incision and the C-terminal half is responsible for the 5' incision. The polypeptide is UvrABC system protein C (Actinobacillus pleuropneumoniae serotype 7 (strain AP76)).